We begin with the raw amino-acid sequence, 198 residues long: Ribonuclease HII (198 aa).

One can recognise an RNase H type-2 domain in the interval 14–198 (GVIAGVDEVG…RNFAPISRAL (185 aa)). The a divalent metal cation site is built by Asp20, Glu21, and Asp112.

The protein belongs to the RNase HII family. Requires Mn(2+) as cofactor. Mg(2+) is required as a cofactor.

It is found in the cytoplasm. It carries out the reaction Endonucleolytic cleavage to 5'-phosphomonoester.. Functionally, endonuclease that specifically degrades the RNA of RNA-DNA hybrids. The sequence is that of Ribonuclease HII from Wolbachia sp. subsp. Drosophila simulans (strain wRi).